A 501-amino-acid polypeptide reads, in one-letter code: Lysine--tRNA ligase (501 aa).

2 residues coordinate Mg(2+): Glu-412 and Glu-419.

It belongs to the class-II aminoacyl-tRNA synthetase family. In terms of assembly, homodimer. Mg(2+) serves as cofactor.

It is found in the cytoplasm. The catalysed reaction is tRNA(Lys) + L-lysine + ATP = L-lysyl-tRNA(Lys) + AMP + diphosphate. This chain is Lysine--tRNA ligase, found in Dechloromonas aromatica (strain RCB).